Reading from the N-terminus, the 257-residue chain is Putative hydro-lyase Bamb_5282 (257 aa).

Belongs to the D-glutamate cyclase family.

In Burkholderia ambifaria (strain ATCC BAA-244 / DSM 16087 / CCUG 44356 / LMG 19182 / AMMD) (Burkholderia cepacia (strain AMMD)), this protein is Putative hydro-lyase Bamb_5282.